A 521-amino-acid chain; its full sequence is Glucose-6-phosphate isomerase (521 aa).

The active-site Proton donor is E327. Residues H358 and K486 contribute to the active site.

It belongs to the GPI family.

It is found in the cytoplasm. It catalyses the reaction alpha-D-glucose 6-phosphate = beta-D-fructose 6-phosphate. The protein operates within carbohydrate biosynthesis; gluconeogenesis. Its pathway is carbohydrate degradation; glycolysis; D-glyceraldehyde 3-phosphate and glycerone phosphate from D-glucose: step 2/4. In terms of biological role, catalyzes the reversible isomerization of glucose-6-phosphate to fructose-6-phosphate. The protein is Glucose-6-phosphate isomerase of Bordetella petrii (strain ATCC BAA-461 / DSM 12804 / CCUG 43448).